Consider the following 271-residue polypeptide: Type III pantothenate kinase (271 aa).

6–13 is an ATP binding site; the sequence is DVRNTNIV. 109–112 lines the substrate pocket; the sequence is GADR. Asp111 serves as the catalytic Proton acceptor. Residue Asp131 coordinates K(+). Thr134 lines the ATP pocket. Thr186 contacts substrate.

Belongs to the type III pantothenate kinase family. In terms of assembly, homodimer. The cofactor is NH4(+). K(+) is required as a cofactor.

It localises to the cytoplasm. The catalysed reaction is (R)-pantothenate + ATP = (R)-4'-phosphopantothenate + ADP + H(+). The protein operates within cofactor biosynthesis; coenzyme A biosynthesis; CoA from (R)-pantothenate: step 1/5. Catalyzes the phosphorylation of pantothenate (Pan), the first step in CoA biosynthesis. In Rhodococcus opacus (strain B4), this protein is Type III pantothenate kinase.